A 489-amino-acid polypeptide reads, in one-letter code: WD repeat-containing protein JIP5 (489 aa).

Residues 4 to 45 form a WD 1 repeat; it reads PLSSDALDLCFHPAAETNLLAVGLISGKIQLINYDDYLSSPS. The disordered stretch occupies residues 46–66; that stretch reads SSRTPLAPPSKKSKPSTISSA. One copy of the WD 2 repeat lies at 124 to 163; it reads EVHDAAPSRVLPVDESLVVTGDDDGVVRLWDVRKGGGKGI. A disordered region spans residues 192–246; that stretch reads SIKEAKKSKTQLKKQRRRARQAERLKEHDKEKREQNASDTEASEPDSEDDAAIKV. The span at 199-210 shows a compositional bias: basic residues; sequence SKTQLKKQRRRA. The span at 211-227 shows a compositional bias: basic and acidic residues; it reads RQAERLKEHDKEKREQN. The segment covering 232 to 241 has biased composition (acidic residues); sequence EASEPDSEDD. WD repeat units lie at residues 279–318 and 323–363; these read DQED…LDHV and GHPA…GVIA. The disordered stretch occupies residues 417-489; that stretch reads IVGLAEDDSD…AGKGGFFSDL (73 aa). 2 stretches are compositionally biased toward acidic residues: residues 421 to 440 and 449 to 472; these read AEDD…DDDD and DGAE…DSED.

The protein belongs to the WD repeat WDR55 family.

Its subcellular location is the nucleus. The protein localises to the nucleolus. This is WD repeat-containing protein JIP5 (JIP5) from Mycosarcoma maydis (Corn smut fungus).